Consider the following 781-residue polypeptide: Protein argonaute (781 aa).

The PAZ domain maps to 110 to 194; that stretch reads SMNELLTERR…RHNDYCNSVM (85 aa). Residues 436 to 760 enclose the Piwi domain; sequence LVVIVIPGPK…LSKFCGEVLR (325 aa).

It belongs to the argonaute family. Ago subfamily. Interacts with miR2. Highly specific binding to the mRNA m7G-cap. May be a component of the RNA-induced silencing complex (RISC), a sequence-specific, multicomponent nuclease that destroys or silences messenger RNAs homologous to the silencing trigger.

It is found in the cytoplasm. Its function is as follows. Plays an essential role in growth and, with Dicer, also involved in microRNA (miRNA)-mediated translational repression. The RNA interference pathway is implicated in antigenic variation having a role in regulation of variant-specific surface protein (VSP)-coding gene expression. Several VSP genes are transcribed but only transcripts encoding the VSP to be expressed accumulate. Antisense RNAs corresponding to the silenced VSP genes are detected. This is Protein argonaute from Giardia intestinalis (Giardia lamblia).